Consider the following 365-residue polypeptide: 2-aminoethylphosphonate--pyruvate transaminase (365 aa).

K194 carries the post-translational modification N6-(pyridoxal phosphate)lysine.

Belongs to the class-V pyridoxal-phosphate-dependent aminotransferase family. PhnW subfamily. Homodimer. Requires pyridoxal 5'-phosphate as cofactor.

It carries out the reaction (2-aminoethyl)phosphonate + pyruvate = phosphonoacetaldehyde + L-alanine. Involved in phosphonate degradation. This Bacillus cereus (strain ATCC 14579 / DSM 31 / CCUG 7414 / JCM 2152 / NBRC 15305 / NCIMB 9373 / NCTC 2599 / NRRL B-3711) protein is 2-aminoethylphosphonate--pyruvate transaminase.